The sequence spans 179 residues: uncharacterized protein (179 aa).

This is an uncharacterized protein from Rickettsia conorii (strain ATCC VR-613 / Malish 7).